The chain runs to 117 residues: Large ribosomal subunit protein bL20 (117 aa).

This sequence belongs to the bacterial ribosomal protein bL20 family.

Binds directly to 23S ribosomal RNA and is necessary for the in vitro assembly process of the 50S ribosomal subunit. It is not involved in the protein synthesizing functions of that subunit. This Helicobacter hepaticus (strain ATCC 51449 / 3B1) protein is Large ribosomal subunit protein bL20.